We begin with the raw amino-acid sequence, 173 residues long: RNA pyrophosphohydrolase (173 aa).

The Nudix hydrolase domain occupies 13–166; the sequence is PYRPCVGLMI…KRKVYEEVVA (154 aa). The Nudix box signature appears at 54–75; sequence GGIDKGEEPLQAAERELYEETG.

Belongs to the Nudix hydrolase family. RppH subfamily. A divalent metal cation is required as a cofactor.

In terms of biological role, accelerates the degradation of transcripts by removing pyrophosphate from the 5'-end of triphosphorylated RNA, leading to a more labile monophosphorylated state that can stimulate subsequent ribonuclease cleavage. The protein is RNA pyrophosphohydrolase of Mesorhizobium japonicum (strain LMG 29417 / CECT 9101 / MAFF 303099) (Mesorhizobium loti (strain MAFF 303099)).